The chain runs to 465 residues: 2-halobenzoate 1,2-dioxygenase large subunit (465 aa).

Positions 56–154 constitute a Rieske domain; sequence WVFLAHESQV…GFNVDGSHDL (99 aa). [2Fe-2S] cluster contacts are provided by Cys-98, His-100, Cys-118, and His-121. Fe cation is bound by residues His-227 and His-232.

It belongs to the bacterial ring-hydroxylating dioxygenase alpha subunit family. Heterohexamer of 3 large (CbdA) subunits and 3 small (CbdB) subunits. The heterohexamer is part of 2-halobenzoate dioxygenase two component enzyme system. The other component is a NADH:acceptor reductase (CdbC). [2Fe-2S] cluster serves as cofactor. It depends on Fe(2+) as a cofactor.

It catalyses the reaction a 2-halobenzoate + NADH + O2 + H(+) = a halide anion + catechol + CO2 + NAD(+). It participates in xenobiotic degradation; benzoate degradation via CoA ligation. Functionally, component of 2-halobenzoate dioxygenase multicomponent enzyme system which catalyzes the incorporation of both atoms of molecular oxygen into 2-halobenzoate to form catechol. The protein is 2-halobenzoate 1,2-dioxygenase large subunit (cbdA) of Burkholderia cepacia (Pseudomonas cepacia).